Reading from the N-terminus, the 343-residue chain is Probable 4-hydroxy-tetrahydrodipicolinate reductase 1, chloroplastic (343 aa).

The transit peptide at 1-14 (MLASTFATHPAAAA) directs the protein to the chloroplast. Residues 167-169 (GTT) and 190-193 (SPQM) each bind NAD(+). Catalysis depends on His226, which acts as the Proton donor/acceptor. Lys230 functions as the Proton donor in the catalytic mechanism. (S)-2,3,4,5-tetrahydrodipicolinate is bound at residue 235 to 236 (GT).

It belongs to the DapB family.

Its subcellular location is the plastid. It is found in the chloroplast. It catalyses the reaction (S)-2,3,4,5-tetrahydrodipicolinate + NAD(+) + H2O = (2S,4S)-4-hydroxy-2,3,4,5-tetrahydrodipicolinate + NADH + H(+). The enzyme catalyses (S)-2,3,4,5-tetrahydrodipicolinate + NADP(+) + H2O = (2S,4S)-4-hydroxy-2,3,4,5-tetrahydrodipicolinate + NADPH + H(+). It functions in the pathway amino-acid biosynthesis; L-lysine biosynthesis via DAP pathway; (S)-tetrahydrodipicolinate from L-aspartate: step 4/4. Its function is as follows. Catalyzes the conversion of 4-hydroxy-tetrahydrodipicolinate (HTPA) to tetrahydrodipicolinate. The chain is Probable 4-hydroxy-tetrahydrodipicolinate reductase 1, chloroplastic (DAPB1) from Oryza sativa subsp. japonica (Rice).